We begin with the raw amino-acid sequence, 173 residues long: NAD(P)H-quinone oxidoreductase subunit J (173 aa).

Belongs to the complex I 30 kDa subunit family. NDH-1 can be composed of about 15 different subunits; different subcomplexes with different compositions have been identified which probably have different functions.

It localises to the cellular thylakoid membrane. The enzyme catalyses a plastoquinone + NADH + (n+1) H(+)(in) = a plastoquinol + NAD(+) + n H(+)(out). It catalyses the reaction a plastoquinone + NADPH + (n+1) H(+)(in) = a plastoquinol + NADP(+) + n H(+)(out). NDH-1 shuttles electrons from an unknown electron donor, via FMN and iron-sulfur (Fe-S) centers, to quinones in the respiratory and/or the photosynthetic chain. The immediate electron acceptor for the enzyme in this species is believed to be plastoquinone. Couples the redox reaction to proton translocation, and thus conserves the redox energy in a proton gradient. Cyanobacterial NDH-1 also plays a role in inorganic carbon-concentration. The protein is NAD(P)H-quinone oxidoreductase subunit J of Prochlorococcus marinus (strain NATL2A).